The primary structure comprises 493 residues: Cysteine--tRNA ligase (493 aa).

Cys-29 contacts Zn(2+). The short motif at 31 to 41 is the 'HIGH' region element; that stretch reads VTVYDLCHLGH. A disordered region spans residues 154-179; it reads KLSGRDPDDQQQGASGRTADGEESRK. Zn(2+) contacts are provided by Cys-213, His-238, and Glu-242. The 'KMSKS' region signature appears at 270–274; that stretch reads KMSKS. Position 273 (Lys-273) interacts with ATP.

It belongs to the class-I aminoacyl-tRNA synthetase family. Monomer. Requires Zn(2+) as cofactor.

Its subcellular location is the cytoplasm. It catalyses the reaction tRNA(Cys) + L-cysteine + ATP = L-cysteinyl-tRNA(Cys) + AMP + diphosphate. This chain is Cysteine--tRNA ligase, found in Synechococcus sp. (strain CC9605).